Consider the following 596-residue polypeptide: Serine/threonine-protein kinase PknH (596 aa).

Topologically, residues 1–373 (MSDAQDSRVG…QTPRKTNPWP (373 aa)) are cytoplasmic. In terms of domain architecture, Protein kinase spans 16-276 (YHLKRLLGRG…DLALAAHEAL (261 aa)). ATP is bound by residues 22–30 (LGRGGMGEV) and lysine 45. Aspartate 139 functions as the Proton acceptor in the catalytic mechanism. A Phosphothreonine modification is found at threonine 170. Residues 292–368 (QESTLPGTAA…PSPWAQTPRK (77 aa)) form a disordered region. A compositionally biased stretch (pro residues) spans 307-318 (PTMPTVTPPPIQ). The chain crosses the membrane as a helical span at residues 374-394 (LVAGAAAVVLVLVLGAIGIWI). At 395–596 (ANRPKPVQPP…AKIVDKVNKE (202 aa)) the chain is on the extracellular side.

This sequence belongs to the protein kinase superfamily. Ser/Thr protein kinase family. In terms of processing, autophosphorylated on threonine and serine residues.

It is found in the cell membrane. It carries out the reaction L-seryl-[protein] + ATP = O-phospho-L-seryl-[protein] + ADP + H(+). The enzyme catalyses L-threonyl-[protein] + ATP = O-phospho-L-threonyl-[protein] + ADP + H(+). This chain is Serine/threonine-protein kinase PknH (pknH), found in Mycobacterium bovis (strain ATCC BAA-935 / AF2122/97).